The chain runs to 571 residues: Phototropic-responsive NPH3 family protein NPY1 (571 aa).

Residues 29–97 form the BTB domain; it reads SDVTIHVGEV…CYGMTVTLNA (69 aa). An NPH3 domain is found at 210–468; sequence DWWVEDVCEL…VQVLYFEQLR (259 aa). Phosphotyrosine is present on Y409. The disordered stretch occupies residues 475 to 571; that stretch reads ASVAASSHSP…SSRRRRHSIS (97 aa). Residues 484–504 show a composition bias toward basic and acidic residues; sequence PVEKTEENKGEEATKKVELSK. Low complexity predominate over residues 540 to 562; the sequence is SNKSSEVSSGSSQSPPAKSSSSS.

The protein belongs to the NPH3 family. Component of a complex made of PINs (e.g. PIN1 and PIN2), MAB4/MELs (e.g. NPY1/MAB4 and NPY5/MEL1) and AGC kinases (e.g. D6PK and PID) at the plasma membrane. Binds directly to PIN2 and PID. Accumulates in organ primordia such as cotyledons, leaves and floral organs. Expressed mainly in the apical regions of embryos including cotyledon tips and the apical meristem. Induced by the transcription factor ARF5/MP at the periphery of inflorescence meristems. Highly expressed in primary root tips and radicles.

The protein resides in the late endosome. The protein localises to the cell membrane. It localises to the cytoplasm. Its subcellular location is the cytosol. It functions in the pathway protein modification; protein ubiquitination. In terms of biological role, may act as a substrate-specific adapter of an E3 ubiquitin-protein ligase complex (CUL3-RBX1-BTB) which mediates the ubiquitination and subsequent proteasomal degradation of target proteins. Coregulates with PID the auxin-mediated plant organogenesis. Regulates basipetal PIN proteins (e.g. PIN1) polarization to establish inward auxin transport from the L1 surface of incipient organ primordia; this process is essential for the progression of flower organs development. Recruited to the plasma membrane by PINs (e.g. PIN1 and PIN2) and, in concert with AGC kinases-mediated (e.g. D6PK and PID) PINs phosphorylation, maintains their cell polarity (apical or basal) through limiting lateral diffusion-based escape. Induces auxin response in inner cell layers through a shift in PIN1 localization. Influences cotyledon development by regulating auxin distribution mainly in the protodermal cell layer. May play an essential role in root gravitropic responses. This chain is Phototropic-responsive NPH3 family protein NPY1, found in Arabidopsis thaliana (Mouse-ear cress).